Consider the following 243-residue polypeptide: Cytochrome c oxidase subunit 2 (243 aa).

Residues 1–34 are Mitochondrial intermembrane-facing; that stretch reads MNNIIHNDAPTPWGIYFQDGASPVYDGIVELHDQ. A helical membrane pass occupies residues 35 to 55; it reads VLFYLLIVLVGVSWILFSTIL. Over 56–74 the chain is Mitochondrial matrix; sequence RFRGSGIVHKYHNHSTTIE. The helical transmembrane segment at 75-97 threads the bilayer; the sequence is FVWTVSPALLLIAIAFPSFKLLY. Topologically, residues 98–243 are mitochondrial intermembrane; sequence LMDEVIDPSI…EKFLSWLDNQ (146 aa). 6 residues coordinate Cu cation: His178, Cys213, Glu215, Cys217, His221, and Met224. Glu215 is a binding site for Mg(2+).

It belongs to the cytochrome c oxidase subunit 2 family. As to quaternary structure, component of the cytochrome c oxidase (complex IV, CIV), a multisubunit enzyme composed of a catalytic core of 3 subunits and several supernumerary subunits. The complex exists as a monomer or a dimer and forms supercomplexes (SCs) in the inner mitochondrial membrane with ubiquinol-cytochrome c oxidoreductase (cytochrome b-c1 complex, complex III, CIII). Cu cation is required as a cofactor.

It is found in the mitochondrion inner membrane. The catalysed reaction is 4 Fe(II)-[cytochrome c] + O2 + 8 H(+)(in) = 4 Fe(III)-[cytochrome c] + 2 H2O + 4 H(+)(out). Functionally, component of the cytochrome c oxidase, the last enzyme in the mitochondrial electron transport chain which drives oxidative phosphorylation. The respiratory chain contains 3 multisubunit complexes succinate dehydrogenase (complex II, CII), ubiquinol-cytochrome c oxidoreductase (cytochrome b-c1 complex, complex III, CIII) and cytochrome c oxidase (complex IV, CIV), that cooperate to transfer electrons derived from NADH and succinate to molecular oxygen, creating an electrochemical gradient over the inner membrane that drives transmembrane transport and the ATP synthase. Cytochrome c oxidase is the component of the respiratory chain that catalyzes the reduction of oxygen to water. Electrons originating from reduced cytochrome c in the intermembrane space (IMS) are transferred via the dinuclear copper A center (CU(A)) of subunit 2 and heme A of subunit 1 to the active site in subunit 1, a binuclear center (BNC) formed by heme A3 and copper B (CU(B)). The BNC reduces molecular oxygen to 2 water molecules using 4 electrons from cytochrome c in the IMS and 4 protons from the mitochondrial matrix. In Pneumocystis carinii, this protein is Cytochrome c oxidase subunit 2.